The chain runs to 445 residues: Phosphoglucosamine mutase (445 aa).

S102 acts as the Phosphoserine intermediate in catalysis. Residues S102, D241, D243, and D245 each coordinate Mg(2+). At S102 the chain carries Phosphoserine.

It belongs to the phosphohexose mutase family. The cofactor is Mg(2+). Activated by phosphorylation.

The catalysed reaction is alpha-D-glucosamine 1-phosphate = D-glucosamine 6-phosphate. Functionally, catalyzes the conversion of glucosamine-6-phosphate to glucosamine-1-phosphate. The polypeptide is Phosphoglucosamine mutase (Pectobacterium carotovorum subsp. carotovorum (strain PC1)).